Here is a 321-residue protein sequence, read N- to C-terminus: Probable nucleosome assembly protein (321 aa).

Positions 272–298 are enriched in acidic residues; the sequence is EENDYDFGEDFEDEEGEDDDEEDDEEE. Residues 272 to 321 are disordered; it reads EENDYDFGEDFEDEEGEDDDEEDDEEEQTIKKPSGKGKAQPQQPQDCKQQ. The segment covering 311–321 has biased composition (low complexity); sequence QPQQPQDCKQQ.

This sequence belongs to the nucleosome assembly protein (NAP) family.

It is found in the nucleus. Its function is as follows. May modulate chromatin structure by regulation of histone octamer formation. The sequence is that of Probable nucleosome assembly protein (nap1) from Dictyostelium discoideum (Social amoeba).